The sequence spans 175 residues: Nucleoside-triphosphatase THEP1 (175 aa).

ATP contacts are provided by residues 16 to 23 (GMPGVGKT) and 103 to 110 (VAFIDEIG).

The protein belongs to the THEP1 NTPase family.

It carries out the reaction a ribonucleoside 5'-triphosphate + H2O = a ribonucleoside 5'-diphosphate + phosphate + H(+). In terms of biological role, has nucleotide phosphatase activity towards ATP, GTP, CTP, TTP and UTP. May hydrolyze nucleoside diphosphates with lower efficiency. The sequence is that of Nucleoside-triphosphatase THEP1 from Pyrobaculum calidifontis (strain DSM 21063 / JCM 11548 / VA1).